Reading from the N-terminus, the 122-residue chain is Large ribosomal subunit protein uL18 (122 aa).

It belongs to the universal ribosomal protein uL18 family. Part of the 50S ribosomal subunit; part of the 5S rRNA/L5/L18/L25 subcomplex. Contacts the 5S and 23S rRNAs.

Functionally, this is one of the proteins that bind and probably mediate the attachment of the 5S RNA into the large ribosomal subunit, where it forms part of the central protuberance. This is Large ribosomal subunit protein uL18 from Trichlorobacter lovleyi (strain ATCC BAA-1151 / DSM 17278 / SZ) (Geobacter lovleyi).